A 540-amino-acid polypeptide reads, in one-letter code: CBL-interacting protein kinase 12 (540 aa).

The segment at 1–23 (MLMATVSPARREPTPQAVRASPM) is disordered. Residues 46–300 (YELGRVLGQG…VPEIIESDWF (255 aa)) enclose the Protein kinase domain. Residues 52 to 60 (LGQGSFAKV) and Lys-75 contribute to the ATP site. The Proton acceptor role is filled by Asp-168. Residues 186 to 215 (DFGLAAGPDQFDPDGLLHTFCGTPAYVAPE) form an activation loop region. Positions 333–348 (PPPLGLAPPVPPPPQG) are enriched in pro residues. The interval 333–380 (PPPLGLAPPVPPPPQGDDPDGSGSESDSSVVSCPATLSTGESQRVRGS) is disordered. Positions 353–364 (GSGSESDSSVVS) are enriched in low complexity. The 37-residue stretch at 370–406 (STGESQRVRGSLPRPASLNAFDIISFSKGFNLSGLFE) folds into the NAF domain. Residues 409 to 438 (GNEIRFVSGEPMSDIVKKLEEIAKVKSFTV) form a PPI region.

Belongs to the protein kinase superfamily. CAMK Ser/Thr protein kinase family. SNF1 subfamily. Mg(2+) serves as cofactor. Autophosphorylated. As to expression, expressed at low levels in leaf blades.

The enzyme catalyses L-seryl-[protein] + ATP = O-phospho-L-seryl-[protein] + ADP + H(+). It carries out the reaction L-threonyl-[protein] + ATP = O-phospho-L-threonyl-[protein] + ADP + H(+). Functionally, involved in drought stress tolerance. CIPK serine-threonine protein kinases interact with CBL proteins. Binding of a CBL protein to the regulatory NAF domain of CIPK protein lead to the activation of the kinase in a calcium-dependent manner. In Oryza sativa subsp. japonica (Rice), this protein is CBL-interacting protein kinase 12 (CIPK12).